Consider the following 149-residue polypeptide: Large ribosomal subunit protein bL9 (149 aa).

Belongs to the bacterial ribosomal protein bL9 family.

In terms of biological role, binds to the 23S rRNA. The chain is Large ribosomal subunit protein bL9 from Pasteurella multocida (strain Pm70).